The primary structure comprises 433 residues: Acetyl-CoA-benzylalcohol acetyltransferase (433 aa).

Active-site proton acceptor residues include His152 and Asp377.

This sequence belongs to the plant acyltransferase family. The N-terminus is blocked. Expressed in petals, style, sepals and stamens. Very low expression in stigma and not detected in leaves.

It carries out the reaction benzyl alcohol + acetyl-CoA = benzyl acetate + CoA. The enzyme catalyses (E)-cinnamyl alcohol + acetyl-CoA = (E)-cinnamyl acetate + CoA. Its function is as follows. Involved in the biosynthesis of benzyl acetate, a major constituent of the floral scent. Can use benzylalcohol, cinnamylalcohol, 3-cis-hexene-1-ol or heptanol as substrates. Has some activity with 2-phenylethanol and 2-naphtalene-ethanol, but no activity with linalool, 2-hydroxybenzylalcohol, 3-hydroxybenzylalcohol or 4-hydroxybenzylalcohol. The protein is Acetyl-CoA-benzylalcohol acetyltransferase (BEAT) of Clarkia breweri (Fairy fans).